We begin with the raw amino-acid sequence, 334 residues long: L-lactate dehydrogenase B chain (334 aa).

NAD(+) is bound by residues 30-58 (GQVGMACAVSILLRDLCDELALVDVMEDR) and Arg100. 3 residues coordinate substrate: Arg107, Asn139, and Arg170. Asn139 serves as a coordination point for NAD(+). His194 (proton acceptor) is an active-site residue. Thr249 provides a ligand contact to substrate.

It belongs to the LDH/MDH superfamily. LDH family. Homotetramer.

Its subcellular location is the cytoplasm. It carries out the reaction (S)-lactate + NAD(+) = pyruvate + NADH + H(+). It functions in the pathway fermentation; pyruvate fermentation to lactate; (S)-lactate from pyruvate: step 1/1. In terms of biological role, interconverts simultaneously and stereospecifically pyruvate and lactate with concomitant interconversion of NADH and NAD(+). This Fundulus heteroclitus (Killifish) protein is L-lactate dehydrogenase B chain (ldhb).